A 300-amino-acid polypeptide reads, in one-letter code: Ribonuclease Z (300 aa).

Residues His63, His65, Asp67, His68, His140, Asp207, and His265 each coordinate Zn(2+). Residue Asp67 is the Proton acceptor of the active site.

It belongs to the RNase Z family. Homodimer. Zn(2+) serves as cofactor.

It catalyses the reaction Endonucleolytic cleavage of RNA, removing extra 3' nucleotides from tRNA precursor, generating 3' termini of tRNAs. A 3'-hydroxy group is left at the tRNA terminus and a 5'-phosphoryl group is left at the trailer molecule.. Functionally, zinc phosphodiesterase, which displays some tRNA 3'-processing endonuclease activity. Probably involved in tRNA maturation, by removing a 3'-trailer from precursor tRNA. The sequence is that of Ribonuclease Z from Ignicoccus hospitalis (strain KIN4/I / DSM 18386 / JCM 14125).